A 118-amino-acid polypeptide reads, in one-letter code: Ribonuclease P protein component (118 aa).

Belongs to the RnpA family. As to quaternary structure, consists of a catalytic RNA component (M1 or rnpB) and a protein subunit.

The enzyme catalyses Endonucleolytic cleavage of RNA, removing 5'-extranucleotides from tRNA precursor.. Functionally, RNaseP catalyzes the removal of the 5'-leader sequence from pre-tRNA to produce the mature 5'-terminus. It can also cleave other RNA substrates such as 4.5S RNA. The protein component plays an auxiliary but essential role in vivo by binding to the 5'-leader sequence and broadening the substrate specificity of the ribozyme. The protein is Ribonuclease P protein component of Shewanella putrefaciens (strain CN-32 / ATCC BAA-453).